The following is a 74-amino-acid chain: ATP synthase subunit c (74 aa).

2 helical membrane-spanning segments follow: residues 8–28 (FIGI…VSNI) and 52–72 (IGAG…MLLI).

The protein belongs to the ATPase C chain family. In terms of assembly, F-type ATPases have 2 components, F(1) - the catalytic core - and F(0) - the membrane proton channel. F(1) has five subunits: alpha(3), beta(3), gamma(1), delta(1), epsilon(1). F(0) has three main subunits: a(1), b(2) and c(10-14). The alpha and beta chains form an alternating ring which encloses part of the gamma chain. F(1) is attached to F(0) by a central stalk formed by the gamma and epsilon chains, while a peripheral stalk is formed by the delta and b chains.

Its subcellular location is the cell inner membrane. In terms of biological role, f(1)F(0) ATP synthase produces ATP from ADP in the presence of a proton or sodium gradient. F-type ATPases consist of two structural domains, F(1) containing the extramembraneous catalytic core and F(0) containing the membrane proton channel, linked together by a central stalk and a peripheral stalk. During catalysis, ATP synthesis in the catalytic domain of F(1) is coupled via a rotary mechanism of the central stalk subunits to proton translocation. Functionally, key component of the F(0) channel; it plays a direct role in translocation across the membrane. A homomeric c-ring of between 10-14 subunits forms the central stalk rotor element with the F(1) delta and epsilon subunits. The protein is ATP synthase subunit c of Rickettsia akari (strain Hartford).